Consider the following 607-residue polypeptide: F-box protein At-B (607 aa).

The 39-residue stretch at 9–47 (LAEEILKRLDLENLCSVACVSTTLRSAVVSGVLPSLTSL) folds into the F-box domain. LRR repeat units lie at residues 51-76 (VFSPDDETLNHVLRGCIGLSSLTLNC), 77-99 (LRLNAASVRGVLGPHLRELHLLR), 100-125 (CSLLSSTVLTYIGTLCPNLRVLTLEM), 130-155 (SPDVFQSNLTQMLNGCPYLESLQLNI), 228-253 (LDLISDRLIIAITGSLPQLVKLDLED), 262-286 (DNDLTYTGLQALGFCQQLTSLSLVR), 295-320 (FKRINDMGIFLLSEACKGLESVRLGG), 321-346 (FPKVSDAGFASLLHSCRNLKKFEVRG), 347-372 (AFLLSDLAFHDVTGSSCSLQEVRLST), 373-397 (CPLITSEAVKKLGLCGNLEVLDLGS), 398-422 (CKSISDSCLNSVSALRKLTSLNLAG), 424-447 (DVTDSGMLALGKSDVPITQLSLRG), 448-477 (CRRVSDRGISYLLNNEGTISKTLSTLDLGH), 478-503 (MPGISDRAIHTITHCCKALTELSIRS), 504-536 (CFHVTDSSIESLATWERQAEGGSKQLRKLNVHN), and 537-563 (CVSLTTGALRWLSKPSFAGLHWLGMGQ).

The protein is F-box protein At-B (ATB) of Arabidopsis thaliana (Mouse-ear cress).